The chain runs to 557 residues: Protein NRT1/ PTR FAMILY 2.6 (557 aa).

Helical transmembrane passes span 26–46 (ITFP…LGWL), 67–87 (ILNI…IAAD), 89–109 (FFGT…GVVL), 136–156 (NIQL…AGGL), 177–197 (FFNW…TAIV), 203–223 (ISWS…LIVF), 318–338 (IIPL…QLGL), 356–376 (IPAG…IIVN), 398–418 (VGIG…VEAK), 439–459 (VLWL…HFPG), 478–498 (SITS…IDLI), and 518–538 (YWIL…CSWF).

Belongs to the major facilitator superfamily. Proton-dependent oligopeptide transporter (POT/PTR) (TC 2.A.17) family. As to expression, expressed in roots.

The protein localises to the membrane. Its function is as follows. Transporter involved in a passive nitrate efflux. The polypeptide is Protein NRT1/ PTR FAMILY 2.6 (NPF2.6) (Arabidopsis thaliana (Mouse-ear cress)).